We begin with the raw amino-acid sequence, 450 residues long: Tol-Pal system protein TolB (450 aa).

The first 47 residues, 1-47 (MRKLWAPNWLSAKRHHANQAATRLIGRHALMAWLAAALALSAGAAQA), serve as a signal peptide directing secretion.

Belongs to the TolB family. As to quaternary structure, the Tol-Pal system is composed of five core proteins: the inner membrane proteins TolA, TolQ and TolR, the periplasmic protein TolB and the outer membrane protein Pal. They form a network linking the inner and outer membranes and the peptidoglycan layer.

Its subcellular location is the periplasm. Its function is as follows. Part of the Tol-Pal system, which plays a role in outer membrane invagination during cell division and is important for maintaining outer membrane integrity. This is Tol-Pal system protein TolB from Cupriavidus pinatubonensis (strain JMP 134 / LMG 1197) (Cupriavidus necator (strain JMP 134)).